Consider the following 579-residue polypeptide: Zinc finger protein 248 (579 aa).

One can recognise a KRAB domain in the interval 8–79; it reads VSFKDVCVDF…EKGFPSQCHP (72 aa). Residues 240–264 form a C2H2-type 1; degenerate zinc finger; that stretch reads TVCKYNECGRTFIESLKLNISQRPH. Lys341 is covalently cross-linked (Glycyl lysine isopeptide (Lys-Gly) (interchain with G-Cter in SUMO2)). 7 consecutive C2H2-type zinc fingers follow at residues 380 to 402, 408 to 430, 436 to 458, 464 to 486, 492 to 514, 520 to 543, and 548 to 570; these read FECG…QRTH, YECT…QRTH, YECK…QRTH, YECN…QRTH, FICN…QRTH, YKCN…RTHT, and YECN…QRIH.

The protein belongs to the krueppel C2H2-type zinc-finger protein family.

It is found in the nucleus. May be involved in transcriptional regulation. This chain is Zinc finger protein 248 (ZNF248), found in Homo sapiens (Human).